Consider the following 176-residue polypeptide: Interleukin-7 (176 aa).

The signal sequence occupies residues 1–25 (MFHVSFRYIFGIPPLILVLLPVASS). Intrachain disulfides connect cysteine 27–cysteine 165, cysteine 58–cysteine 153, and cysteine 71–cysteine 116. Asparagine 94, asparagine 115, and asparagine 140 each carry an N-linked (GlcNAc...) asparagine glycan.

Belongs to the IL-7/IL-9 family.

It localises to the secreted. In terms of biological role, hematopoietic growth factor capable of stimulating the proliferation of lymphoid progenitors. It is important for proliferation during certain stages of B-cell maturation. This is Interleukin-7 (IL7) from Sus scrofa (Pig).